A 214-amino-acid chain; its full sequence is Probable transaldolase (214 aa).

Lys83 functions as the Schiff-base intermediate with substrate in the catalytic mechanism.

It belongs to the transaldolase family. Type 3B subfamily.

The protein localises to the cytoplasm. It carries out the reaction D-sedoheptulose 7-phosphate + D-glyceraldehyde 3-phosphate = D-erythrose 4-phosphate + beta-D-fructose 6-phosphate. Its pathway is carbohydrate degradation; pentose phosphate pathway; D-glyceraldehyde 3-phosphate and beta-D-fructose 6-phosphate from D-ribose 5-phosphate and D-xylulose 5-phosphate (non-oxidative stage): step 2/3. In terms of biological role, transaldolase is important for the balance of metabolites in the pentose-phosphate pathway. This chain is Probable transaldolase, found in Geobacter sp. (strain M21).